A 437-amino-acid chain; its full sequence is Type II methyltransferase M.HgiCII (437 aa).

Residues F4–E431 enclose the SAM-dependent MTase C5-type domain. The active site involves C75.

It belongs to the class I-like SAM-binding methyltransferase superfamily. C5-methyltransferase family.

It catalyses the reaction a 2'-deoxycytidine in DNA + S-adenosyl-L-methionine = a 5-methyl-2'-deoxycytidine in DNA + S-adenosyl-L-homocysteine + H(+). Functionally, a methylase that recognizes the double-stranded sequence 5'-GGWCC-3', methylates C-? on both strands and protects the DNA from cleavage by the HgiCII endonuclease. This Herpetosiphon aurantiacus (Herpetosiphon giganteus) protein is Type II methyltransferase M.HgiCII.